Here is a 913-residue protein sequence, read N- to C-terminus: Glutamate receptor ionotropic, kainate 2 (913 aa).

The Extracellular segment spans residues 1–566 (MCAGTMKIIS…VFSFLNPLSP (566 aa)). N-linked (GlcNAc...) asparagine glycans are attached at residues Asn-72, Asn-78, Asn-280, Asn-383, Asn-417, Asn-428, and Asn-435. Cys-101 and Cys-352 are disulfide-bonded. Positions 521, 523, and 528 each coordinate L-glutamate. An N-linked (GlcNAc...) asparagine glycan is attached at Asn-551. Residues 567 to 587 (DIWMYILLAYLGVSCVLFVIA) traverse the membrane as a helical segment. At 588-643 (RFSPYEWYNPHPCNPDSDVVENNFTLLNSFWFGVGALMQQGSELMPKALSTRIVGG) the chain is on the cytoplasmic side. Residues 644 to 664 (IWWFFTLIIISSYTANLAAFL) form a helical membrane-spanning segment. Residues 665–824 (TVERMESPID…KEASALGVQN (160 aa)) are Extracellular-facing. Residues Ala-694, Thr-695, and Glu-743 each coordinate L-glutamate. A disulfide bridge connects residues Cys-755 and Cys-809. N-linked (GlcNAc...) asparagine glycosylation is present at Asn-756. A helical transmembrane segment spans residues 825–845 (IGGIFIVLAAGLVLSVFVAVG). Residues 846–913 (EFLYKSKKNA…RRLPGKETMA (68 aa)) lie on the Cytoplasmic side of the membrane.

The protein belongs to the glutamate-gated ion channel (TC 1.A.10.1) family. GRIK2 subfamily. Homotetramer and heterotetramer with GRIK5. Tetramers may be formed by the dimerization of dimers.

The protein localises to the cell membrane. Its subcellular location is the postsynaptic cell membrane. The catalysed reaction is Ca(2+)(in) = Ca(2+)(out). It carries out the reaction Na(+)(in) = Na(+)(out). Cold receptor activity activated by temperatures between 10-19 degrees Celsius. Functionally, ionotropic glutamate receptor that functions as a cation-permeable ligand-gated ion channel, gated by L-glutamate and the glutamatergic agonist kainic acid. L-glutamate acts as an excitatory neurotransmitter at many synapses in the central nervous system. Binding of the excitatory neurotransmitter L-glutamate induces a conformation change, leading to the opening of the cation channel, and thereby converts the chemical signal to an electrical impulse. The receptor then desensitizes rapidly and enters a transient inactive state, characterized by the presence of bound agonist. Independent of its ionotropic glutamate receptor activity, acts as a thermoreceptor conferring sensitivity to cold temperatures. Functions in dorsal root ganglion neurons. The polypeptide is Glutamate receptor ionotropic, kainate 2 (grik2) (Xenopus laevis (African clawed frog)).